Consider the following 642-residue polypeptide: Epithelial sodium channel subunit alpha (642 aa).

Residues 1-81 lie on the Cytoplasmic side of the membrane; that stretch reads MHQVVTVKAE…VCSKRNKMKT (81 aa). Residues 82-102 traverse the membrane as a helical segment; it reads AFWSVLFFLTFGLMYWQFGIL. Over 103-553 the chain is Extracellular; sequence YREYFSFPVN…NQWSLWFGSS (451 aa). Intrachain disulfides connect Cys130/Cys297, Cys222/Cys229, Cys274/Cys281, Cys385/Cys470, Cys407/Cys447, Cys407/Cys466, Cys411/Cys462, Cys420/Cys447, Cys420/Cys470, and Cys422/Cys436. The interval 170–209 is disordered; that stretch reads GAAQSSQKRSQRSLSHHVQRHPLRRRKRNEPVSLKGNSPP. Positions 178 to 197 are enriched in basic residues; that stretch reads RSQRSLSHHVQRHPLRRRKR. A helical transmembrane segment spans residues 554–574; that stretch reads VLSVVELAELILDFIAITIIL. At 575-642 the chain is on the cytoplasmic side; the sequence is SFKRFRSRQV…RDGEAVIGLE (68 aa). The interval 587–608 is disordered; the sequence is PSVPPPGAHDNTAFQSEPADPS.

This sequence belongs to the amiloride-sensitive sodium channel (TC 1.A.6) family. SCNN1A subfamily. In terms of assembly, heterotrimer; disulfide-linked and containing an alpha/SCNN1A, a beta/SCNN1B and a gamma/SCNN1G subunit.

The protein resides in the apical cell membrane. It is found in the cell projection. It localises to the cilium. The protein localises to the cytoplasmic granule. Its subcellular location is the cytoplasm. The protein resides in the cytoplasmic vesicle. It is found in the secretory vesicle. It localises to the acrosome. The protein localises to the flagellum. The enzyme catalyses Na(+)(in) = Na(+)(out). Its activity is regulated as follows. Originally identified and characterized by its inhibition by the diuretic drug amiloride. Its function is as follows. This is one of the three pore-forming subunits of the heterotrimeric epithelial sodium channel (ENaC), a critical regulator of sodium balance and fluid homeostasis. ENaC operates in epithelial tissues, where it mediates the electrodiffusion of sodium ions from extracellular fluid through the apical membrane of cells, with water following osmotically. The protein is Epithelial sodium channel subunit alpha of Pelodiscus sinensis (Chinese softshell turtle).